The primary structure comprises 72 residues: NAD(P)H-quinone oxidoreductase subunit O (72 aa).

This sequence belongs to the complex I NdhO subunit family. As to quaternary structure, NDH-1 can be composed of about 15 different subunits; different subcomplexes with different compositions have been identified which probably have different functions.

It localises to the cellular thylakoid membrane. It catalyses the reaction a plastoquinone + NADH + (n+1) H(+)(in) = a plastoquinol + NAD(+) + n H(+)(out). The enzyme catalyses a plastoquinone + NADPH + (n+1) H(+)(in) = a plastoquinol + NADP(+) + n H(+)(out). In terms of biological role, NDH-1 shuttles electrons from an unknown electron donor, via FMN and iron-sulfur (Fe-S) centers, to quinones in the respiratory and/or the photosynthetic chain. The immediate electron acceptor for the enzyme in this species is believed to be plastoquinone. Couples the redox reaction to proton translocation, and thus conserves the redox energy in a proton gradient. Cyanobacterial NDH-1 also plays a role in inorganic carbon-concentration. The chain is NAD(P)H-quinone oxidoreductase subunit O from Synechococcus elongatus (strain ATCC 33912 / PCC 7942 / FACHB-805) (Anacystis nidulans R2).